The chain runs to 320 residues: Myoblast determination protein 1 (320 aa).

Methionine 1 is covalently cross-linked (Peptide (Met-Gly) (interchain with G-Cter in ubiquitin)). An N6-methyllysine; by EHMT2 modification is found at lysine 104. The region spanning 109-160 (DRRKAATMRERRRLSKVNEAFETLKRCTSSNPNQRLPKVEILRNAIRYIEGL) is the bHLH domain. 2 disordered regions span residues 174 to 219 (AAAA…PPSG) and 262 to 320 (ESPA…YQVL). 2 stretches are compositionally biased toward polar residues: residues 197–207 (SDASSPRSNCS) and 291–301 (GESSGDPTQSP).

Efficient DNA binding requires dimerization with another bHLH protein. Seems to form active heterodimers with ITF-2. Interacts with SUV39H1. Interacts with DDX5. Interacts with CHD2. Interacts with TSC22D3. Interacts with SETD3. Interacts with P-TEFB complex; promotes the transcriptional activity of MYOD1 through its CDK9-mediated phosphorylation. Interacts with CSRP3. Interacts with NUPR1. Phosphorylated by CDK9. This phosphorylation promotes its function in muscle differentiation. In terms of processing, acetylated by a complex containing EP300 and PCAF. The acetylation is essential to activate target genes. Conversely, its deacetylation by SIRT1 inhibits its function. Post-translationally, ubiquitinated on the N-terminus; which is required for proteasomal degradation. Methylation at Lys-104 by EHMT2/G9a inhibits myogenic activity.

It is found in the nucleus. In terms of biological role, acts as a transcriptional activator that promotes transcription of muscle-specific target genes and plays a role in muscle differentiation. Together with MYF5 and MYOG, co-occupies muscle-specific gene promoter core region during myogenesis. Induces fibroblasts to differentiate into myoblasts. Interacts with and is inhibited by the twist protein. This interaction probably involves the basic domains of both proteins. The sequence is that of Myoblast determination protein 1 (MYOD1) from Homo sapiens (Human).